The chain runs to 430 residues: Serine/threonine transporter SstT (430 aa).

9 helical membrane-spanning segments follow: residues 24–44 (IIVGLIIGTVLALTMPHVTWI), 47–67 (FGTLFVAALKAAAPILVFVLV), 82–102 (FGTVLFLYLFTTFLAAVVAVL), 144–164 (AIIDGNYICILMWACLFGLAM), 186–206 (VIRWVINLAPFGIMGLVFTNV), 223–243 (LLVGTMLLMVLVFGPLVIFIF), 294–314 (IPLGATINMNGAAITITIMAM), 320–340 (LGIQISLPAAILLSVVSALGA), and 361–381 (FGISNDIAMQVVGVGFIIGVI).

It belongs to the dicarboxylate/amino acid:cation symporter (DAACS) (TC 2.A.23) family.

It is found in the cell membrane. It carries out the reaction L-serine(in) + Na(+)(in) = L-serine(out) + Na(+)(out). The catalysed reaction is L-threonine(in) + Na(+)(in) = L-threonine(out) + Na(+)(out). In terms of biological role, involved in the import of serine and threonine into the cell, with the concomitant import of sodium (symport system). This Bifidobacterium adolescentis (strain ATCC 15703 / DSM 20083 / NCTC 11814 / E194a) protein is Serine/threonine transporter SstT.